The primary structure comprises 220 residues: Fructose-6-phosphate aldolase (220 aa).

The active-site Schiff-base intermediate with substrate is lysine 85.

It belongs to the transaldolase family. Type 3A subfamily. In terms of assembly, homodecamer.

It is found in the cytoplasm. The enzyme catalyses beta-D-fructose 6-phosphate = dihydroxyacetone + D-glyceraldehyde 3-phosphate. In terms of biological role, catalyzes the reversible formation of fructose 6-phosphate from dihydroxyacetone and D-glyceraldehyde 3-phosphate via an aldolization reaction. The polypeptide is Fructose-6-phosphate aldolase (Salmonella agona (strain SL483)).